Consider the following 514-residue polypeptide: Maturase K (514 aa).

This sequence belongs to the intron maturase 2 family. MatK subfamily.

The protein resides in the plastid. It localises to the chloroplast. Usually encoded in the trnK tRNA gene intron. Probably assists in splicing its own and other chloroplast group II introns. This Erythronium grandiflorum (Yellow avalanche-lily) protein is Maturase K.